The primary structure comprises 348 residues: Ferredoxin--NADP reductase 1 (348 aa).

Residues D33, K41, Y45, V85, L120, D287, and S328 each coordinate FAD.

Belongs to the ferredoxin--NADP reductase type 2 family. Homodimer. FAD is required as a cofactor.

It catalyses the reaction 2 reduced [2Fe-2S]-[ferredoxin] + NADP(+) + H(+) = 2 oxidized [2Fe-2S]-[ferredoxin] + NADPH. The polypeptide is Ferredoxin--NADP reductase 1 (Oceanobacillus iheyensis (strain DSM 14371 / CIP 107618 / JCM 11309 / KCTC 3954 / HTE831)).